The sequence spans 103 residues: Small ribosomal subunit protein uS10 (103 aa).

The protein belongs to the universal ribosomal protein uS10 family. Part of the 30S ribosomal subunit.

Functionally, involved in the binding of tRNA to the ribosomes. This is Small ribosomal subunit protein uS10 from Pseudoalteromonas translucida (strain TAC 125).